We begin with the raw amino-acid sequence, 76 residues long: Defensin-like protein 164 (76 aa).

An N-terminal signal peptide occupies residues Met1–Ala25. 4 disulfide bridges follow: Cys31–Cys76, Cys41–Cys61, Cys46–Cys70, and Cys50–Cys72.

The protein belongs to the DEFL family.

It localises to the secreted. The sequence is that of Defensin-like protein 164 (LCR38) from Arabidopsis thaliana (Mouse-ear cress).